The sequence spans 64 residues: Prokaryotic ubiquitin-like protein Pup (64 aa).

Residues M1 to T36 form a disordered region. Residues T21–Y58 are ARC ATPase binding. Residues Q26–E52 adopt a coiled-coil conformation. Residue Q64 is modified to Deamidated glutamine. Residue Q64 forms an Isoglutamyl lysine isopeptide (Gln-Lys) (interchain with K-? in acceptor proteins) linkage.

Belongs to the prokaryotic ubiquitin-like protein family. As to quaternary structure, strongly interacts with the proteasome-associated ATPase ARC through a hydrophobic interface; the interacting region of Pup lies in its C-terminal half. There is one Pup binding site per ARC hexamer ring. Post-translationally, is modified by deamidation of its C-terminal glutamine to glutamate by the deamidase Dop, a prerequisite to the subsequent pupylation process.

It functions in the pathway protein degradation; proteasomal Pup-dependent pathway. Functionally, protein modifier that is covalently attached to lysine residues of substrate proteins, thereby targeting them for proteasomal degradation. The tagging system is termed pupylation. This chain is Prokaryotic ubiquitin-like protein Pup, found in Mycobacterium ulcerans (strain Agy99).